Reading from the N-terminus, the 123-residue chain is Ribosome-binding factor A (123 aa).

This sequence belongs to the RbfA family. In terms of assembly, monomer. Binds 30S ribosomal subunits, but not 50S ribosomal subunits or 70S ribosomes.

The protein resides in the cytoplasm. Its function is as follows. One of several proteins that assist in the late maturation steps of the functional core of the 30S ribosomal subunit. Associates with free 30S ribosomal subunits (but not with 30S subunits that are part of 70S ribosomes or polysomes). Required for efficient processing of 16S rRNA. May interact with the 5'-terminal helix region of 16S rRNA. This Geotalea daltonii (strain DSM 22248 / JCM 15807 / FRC-32) (Geobacter daltonii) protein is Ribosome-binding factor A.